A 179-amino-acid polypeptide reads, in one-letter code: Large ribosomal subunit protein uL6 (179 aa).

The protein belongs to the universal ribosomal protein uL6 family. In terms of assembly, part of the 50S ribosomal subunit.

This protein binds to the 23S rRNA, and is important in its secondary structure. It is located near the subunit interface in the base of the L7/L12 stalk, and near the tRNA binding site of the peptidyltransferase center. In Streptomyces avermitilis (strain ATCC 31267 / DSM 46492 / JCM 5070 / NBRC 14893 / NCIMB 12804 / NRRL 8165 / MA-4680), this protein is Large ribosomal subunit protein uL6.